A 445-amino-acid polypeptide reads, in one-letter code: Glycine--tRNA ligase (445 aa).

The substrate site is built by Arg-97 and Glu-145. ATP contacts are provided by residues 177–179 (RNE), 187–192 (FRTCEF), 262–263 (EV), and 308–311 (GLTR). 192–196 (FEQME) lines the substrate pocket. A substrate-binding site is contributed by 304 to 308 (ETSAG).

This sequence belongs to the class-II aminoacyl-tRNA synthetase family. In terms of assembly, homodimer.

It localises to the cytoplasm. The enzyme catalyses tRNA(Gly) + glycine + ATP = glycyl-tRNA(Gly) + AMP + diphosphate. Catalyzes the attachment of glycine to tRNA(Gly). This is Glycine--tRNA ligase from Borreliella burgdorferi (strain ATCC 35210 / DSM 4680 / CIP 102532 / B31) (Borrelia burgdorferi).